Consider the following 100-residue polypeptide: Small ribosomal subunit protein uS14c (100 aa).

The protein belongs to the universal ribosomal protein uS14 family. Part of the 30S ribosomal subunit.

It is found in the plastid. It localises to the chloroplast. Functionally, binds 16S rRNA, required for the assembly of 30S particles. In Carica papaya (Papaya), this protein is Small ribosomal subunit protein uS14c.